The primary structure comprises 175 residues: MDKLADLNYTLSVITSMNDTLHSIIEDPGMAYFPYIASVLTVLFALHKASIPTMKIALKTSKCSYKVIKYCIVTIINTLLKLVGYKEQVTTKDEIEQQMDRIVKEMRRQLEMIDKLTTREIEQVELLKRIHDNLITRPVDVIDMSKEFNQKNIKTLDEWESRKNPYEPSEVTASM.

At 1–28 the chain is on the lumenal side; sequence MDKLADLNYTLSVITSMNDTLHSIIEDP. 2 N-linked (GlcNAc...) asparagine; by host glycosylation sites follow: asparagine 8 and asparagine 18. Residues 29–51 form a helical; Signal-anchor for type III membrane protein membrane-spanning segment; it reads GMAYFPYIASVLTVLFALHKASI. Over 52-175 the chain is Cytoplasmic; sequence PTMKIALKTS…YEPSEVTASM (124 aa). Glutamate 120 and glutamine 123 together coordinate Ca(2+).

The protein belongs to the rotavirus NSP4 family. Homotetramer. Interacts with the immature particle in the viroplasm. Interacts with host CAV1, early and late in infection. Interacts with host integrin ITGA1/ITGB1 heterodimer. Interacts with host integrin ITGA2/ITGB1 heterodimer. Interaction with microtubules blocks trafficking to the Golgi apparatus. In terms of processing, the N-glycosyl content is primarily Man(9)GlcNAc, with a small amount of Man(8)GlcNAc.

The protein resides in the host rough endoplasmic reticulum membrane. It is found in the host membrane. Its subcellular location is the host caveola. It localises to the secreted. Plays an essential role in the virus replication cycle by acting as a viroporin. Creates a pore in the host endoplasmic reticulum and as a consequence releases Ca(2+) in the cytoplasm of infected cell. In turn, high levels of cytoplasmic calcium trigger membrane trafficking and transport of viral ER-associated proteins to viroplasms, sites of viral genome replication and immature particle assembly. In terms of biological role, the secreted form acts as an enterotoxin that causes phospholipase C-dependent elevation of the intracellular calcium concentration in host intestinal mucosa cells. Increased concentration of intracellular calcium disrupts the cytoskeleton and the tight junctions, raising the paracellular permeability. Potentiates chloride ion secretion through a calcium ion-dependent signaling pathway, inducing age-dependent diarrhea. To perform this enterotoxigenic role in vivo, NSP4 is released from infected enterocytes in a soluble form capable of diffusing within the intestinal lumen and interacting with host plasma membrane receptors on neighboring epithelial cells such as integrins ITGA1/ITGB1 and ITGA2/ITGB1. The protein is Non-structural glycoprotein 4 of Rotavirus A (isolate RVA/Human/Italy/VA70/1975/G4P1A[8]) (RV-A).